The following is a 73-amino-acid chain: Neurotoxin Cex13 (73 aa).

The N-terminal stretch at 1-7 (ATGNVWA) is a signal peptide. In terms of domain architecture, LCN-type CS-alpha/beta spans 8–71 (KDGYLVIIKT…TWPLPDKTCG (64 aa)). 4 disulfides stabilise this stretch: Cys-19-Cys-70, Cys-23-Cys-46, Cys-32-Cys-51, and Cys-36-Cys-53. Cysteine amide is present on Cys-70. Residues 71–73 (GTK) constitute a propeptide that is removed on maturation.

Belongs to the long (4 C-C) scorpion toxin superfamily. Sodium channel inhibitor family. Beta subfamily. As to expression, expressed by the venom gland.

Its subcellular location is the secreted. Its function is as follows. Beta toxins bind voltage-independently at site-4 of sodium channels (Nav) and shift the voltage of activation toward more negative potentials thereby affecting sodium channel activation and promoting spontaneous and repetitive firing. This is Neurotoxin Cex13 from Centruroides exilicauda (Bark scorpion).